A 266-amino-acid polypeptide reads, in one-letter code: Type III pantothenate kinase (266 aa).

Residue 6–13 (DVGNSHTV) participates in ATP binding. Residue 112–115 (GIDR) coordinates substrate. Aspartate 114 acts as the Proton acceptor in catalysis. Aspartate 134 lines the K(+) pocket. Threonine 137 serves as a coordination point for ATP. Threonine 190 contacts substrate.

This sequence belongs to the type III pantothenate kinase family. In terms of assembly, homodimer. NH4(+) serves as cofactor. K(+) is required as a cofactor.

It is found in the cytoplasm. It catalyses the reaction (R)-pantothenate + ATP = (R)-4'-phosphopantothenate + ADP + H(+). It functions in the pathway cofactor biosynthesis; coenzyme A biosynthesis; CoA from (R)-pantothenate: step 1/5. In terms of biological role, catalyzes the phosphorylation of pantothenate (Pan), the first step in CoA biosynthesis. This is Type III pantothenate kinase from Desulfotalea psychrophila (strain LSv54 / DSM 12343).